The primary structure comprises 57 residues: UPF0391 membrane protein RPB_2024 (57 aa).

2 helical membrane-spanning segments follow: residues 4-24 (WVVT…GGIA) and 30-50 (IAKV…VVGL).

Belongs to the UPF0391 family.

The protein localises to the cell membrane. The sequence is that of UPF0391 membrane protein RPB_2024 from Rhodopseudomonas palustris (strain HaA2).